A 238-amino-acid polypeptide reads, in one-letter code: MTEYIQDAIPAKLAIAIANPIFPQLDSQLRAGRHISIEMLDEHAFLMDFQTELESFYRRYHVDLIRAPEGFFYLRPKASTLIARSAMSEMEMLVGKVLCYLYLSPERLAQQGIFSQDDVYEELLNLADENKLLKAVNPRSTGSDLDRAKLAEKVGGALRRLARIGIITRVGEQNSKKFIISEAVFRFGADVRAGDDPREVQLRLIRDGEATTPTLLTTEAIEFAEDGARDELEESEAE.

Belongs to the MukE family. As to quaternary structure, interacts, and probably forms a ternary complex, with MukF and MukB. The complex formation is stimulated by calcium or magnesium.

Its subcellular location is the cytoplasm. The protein resides in the nucleoid. Its function is as follows. Involved in chromosome condensation, segregation and cell cycle progression. May participate in facilitating chromosome segregation by condensation DNA from both sides of a centrally located replisome during cell division. Probably acts via its interaction with MukB and MukF. The protein is Chromosome partition protein MukE of Haemophilus ducreyi (strain 35000HP / ATCC 700724).